We begin with the raw amino-acid sequence, 848 residues long: Beta-galactosidase 11 (848 aa).

The N-terminal stretch at 1-23 is a signal peptide; the sequence is MSAAAVLAVVAAAVAALAAAASG. Asparagine 29 is a glycosylation site (N-linked (GlcNAc...) asparagine). The Proton donor role is filled by glutamate 189. Glutamate 260 acts as the Nucleophile in catalysis. Residues asparagine 261, asparagine 472, and asparagine 783 are each glycosylated (N-linked (GlcNAc...) asparagine). Residues 750 to 837 enclose the SUEL-type lectin domain; it reads GGLKPTAVLS…GTLAVQAKCS (88 aa).

This sequence belongs to the glycosyl hydrolase 35 family.

The protein localises to the secreted. The protein resides in the extracellular space. It is found in the apoplast. The enzyme catalyses Hydrolysis of terminal non-reducing beta-D-galactose residues in beta-D-galactosides.. The protein is Beta-galactosidase 11 of Oryza sativa subsp. japonica (Rice).